The primary structure comprises 169 residues: Large ribosomal subunit protein uL10 (169 aa).

Belongs to the universal ribosomal protein uL10 family. As to quaternary structure, part of the ribosomal stalk of the 50S ribosomal subunit. The N-terminus interacts with L11 and the large rRNA to form the base of the stalk. The C-terminus forms an elongated spine to which L12 dimers bind in a sequential fashion forming a multimeric L10(L12)X complex.

In terms of biological role, forms part of the ribosomal stalk, playing a central role in the interaction of the ribosome with GTP-bound translation factors. The protein is Large ribosomal subunit protein uL10 of Rickettsia felis (strain ATCC VR-1525 / URRWXCal2) (Rickettsia azadi).